The sequence spans 543 residues: Chaperonin GroEL 4 (543 aa).

ATP is bound by residues 29 to 32 (TLGP), 86 to 90 (DGTTT), glycine 411, 476 to 478 (DAA), and aspartate 492.

This sequence belongs to the chaperonin (HSP60) family. Forms a cylinder of 14 subunits composed of two heptameric rings stacked back-to-back. Interacts with the co-chaperonin GroES.

It is found in the cytoplasm. It catalyses the reaction ATP + H2O + a folded polypeptide = ADP + phosphate + an unfolded polypeptide.. Functionally, together with its co-chaperonin GroES, plays an essential role in assisting protein folding. The GroEL-GroES system forms a nano-cage that allows encapsulation of the non-native substrate proteins and provides a physical environment optimized to promote and accelerate protein folding. The chain is Chaperonin GroEL 4 from Bradyrhizobium diazoefficiens (strain JCM 10833 / BCRC 13528 / IAM 13628 / NBRC 14792 / USDA 110).